We begin with the raw amino-acid sequence, 1033 residues long: NACHT, LRR and PYD domains-containing protein 3 (1033 aa).

A Pyrin domain is found at 1-91 (MTSVRCKLAQ…WEKAKKDQPE (91 aa)). Position 3 is a phosphoserine (serine 3). Cysteines 6 and 104 form a disulfide. Phosphotyrosine is present on tyrosine 11. Cysteine 126 is lipidated: S-palmitoyl cysteine. Positions 127–130 (KKKK) are required for binding to phosphatidylinositol 4-phosphate (PtdIns4P). Phosphotyrosine; by BTK occurs at positions 132, 136, and 145. Positions 136 to 206 (YRRHVRSRFY…SSLKLELLFE (71 aa)) constitute an FISNA domain. Serine 157 carries the post-translational modification Phosphoserine. Tyrosine 164 carries the post-translational modification Phosphotyrosine; by BTK. Threonine 165 provides a ligand contact to ATP. Position 194 is a phosphoserine; by MAPK8 (serine 194). Serine 197 carries the phosphoserine modification. In terms of domain architecture, NACHT spans 216–532 (HTVVFQGAAG…EFFAAMYYLL (317 aa)). 222 to 230 (GAAGIGKTI) contributes to the ATP binding site. At serine 261 the chain carries Phosphoserine. Residue serine 291 is modified to Phosphoserine; by PKD/PRKD1. Lysine 320 is covalently cross-linked (Glycyl lysine isopeptide (Lys-Gly) (interchain with G-Cter in ubiquitin)). Serine 330 is subject to Phosphoserine. The short motif at 351–355 (LEKLQ) is the KFERQ-like motif 1 element. Residue lysine 426 forms a Glycyl lysine isopeptide (Lys-Gly) (interchain with G-Cter in ubiquitin) linkage. Histidine 518 is an ATP binding site. Residues 601 to 605 (QVRLE) carry the KFERQ-like motif 2 motif. Lysine 687 participates in a covalent cross-link: Glycyl lysine isopeptide (Lys-Gly) (interchain with G-Cter in ubiquitin). A phosphoserine mark is found at serine 725 and serine 732. LRR repeat units lie at residues 739-759 (SLTE…RVLC), 768-789 (NIQR…DISS), 796-816 (KLVE…RLLC), 825-846 (NLQK…DLAL), and 853-873 (SLTR…QVLC). The KFERQ-like motif 3 signature appears at 795–799 (QKLVE). Serine 803 bears the Phosphoserine; by CSNK1A1 mark. 3 S-palmitoyl cysteine lipidation sites follow: cysteine 834, cysteine 835, and cysteine 841. Phosphotyrosine is present on tyrosine 858. Lysine 875 is covalently cross-linked (Glycyl lysine isopeptide (Lys-Gly) (interchain with G-Cter in ubiquitin)). LRR repeat units follow at residues 882–903 (NLQK…ALTS), 910–930 (NFTH…RLLC), 939–960 (KLQM…NLST), and 967–988 (SLRK…TLCE). A lipid anchor (S-palmitoyl cysteine) is attached at cysteine 955. Lysine 970 participates in a covalent cross-link: Glycyl lysine isopeptide (Lys-Gly) (interchain with G-Cter in ubiquitin). Residues 988–992 (EVLKQ) carry the KFERQ-like motif 4 motif. Serine 1032 is modified (phosphoserine).

The protein belongs to the NLRP family. Sensor component of NLRP3 inflammasomes; inflammasomes are supramolecular complexes that assemble in the cytosol in response to pathogens and other damage-associated signals and play critical roles in innate immunity and inflammation. The core of NLRP3 inflammasomes consists of a signal sensor component (NLRP3), an adapter (PYCARD/ASC), which recruits an effector pro-inflammatory caspase (CASP1 and, possibly, CASP4 and CASP5). Homodecamer; inactive NLRP3 forms homodecameric double-ring cages that hide pyrin domains within NACHT-LRR rings to avoid premature activation. Interacts (via pyrin domain) with PYCARD/ASC (via pyrin domain); interaction is direct. Interacts (via LRR repeat domain) with NEK7 (via N-terminus); the interaction is required for the formation of the complex NLRP3:PYCARD, oligomerization of PYCARD/ASC and activation of CASP1. Interacts (via LRR repeat domain) with NR4A1/Nur77 (via N-terminus); the interaction is direct, requires activation of NR4A1 by its ligands NBRE-containing dsDNA and lipopolysaccharide, and stimulates the association of NLRP3 with NEK7 for non-canonical NLRP3 inflammasome activation. Interacts with CARD8; leading to inhibit formation of the NLRP3 inflammasome. Interacts with MEFV; this interaction targets NLRP3 to degradation by autophagy, hence preventing excessive IL1B- and IL18-mediated inflammation. Interacts with EIF2AK2/PKR; this interaction requires EIF2AK2 activity, is accompanied by EIF2AK2 autophosphorylation and promotes inflammasome assembly in response to specific stimuli. Interacts with GBP5 (via DAPIN domain); this interaction promotes inflammasome assembly in response to microbial and soluble, but not crystalline, agents. Interacts with PML (isoform PML-1) (via the leucine-rich repeat (LRR) domain); PML-mediated increase in NLRP3 inflammasome activation does not depend upon this interaction. Interacts (via NACHT domain) with DHX33 (via DEAH box); NLRP3 activation in presence of cytosolic dsRNA is mediated by DHX33. Interacts (via NACHT and LRR domains) with ARRB2; this interaction is direct and inducible by polyunsaturated fatty acids (PUFAs). Interacts (via NACHT domain) with DDX3X under both LPS-primed and inflammasome-activating conditions. Interacts with IRF4 (via the LRR domain); this interaction is direct and is required for optimal IRF4 binding to IL4 promoter and efficient IL4 transactivation during differentiation of Th2 helper T-cells. Interacts with MAVS; promoting localization to mitochondria and activation of the NLRP3 inflammasome. Interacts with MARK4; promoting localization of NLRP3 to the microtubule organizing center (MTOC). Interacts with TRIM50; this interaction also promotes NLRP3 oligomerization and subsequent inflammasome activation. Interacts with IRGM; preventing NLRP3 inflammasome assembly and promoting NLRP3 degradation. Interacts (via KFERQ-like motifs) with HSPA8/HSC70; promoting NLRP3 degradation by the chaperone-mediated autophagy pathway. Interacts (via NACHT and LLR domains) with ABHD8; this interaction is enhanced in the presence of NLRP3 inflammasome inducers, such as ATP, nigericin, silica, or alum. Interaction with ABHD8 leads the recruitment of ZDHHC12, hence facilitating NLRP3 palmitoylation and degradation by the chaperone-mediated autophagy pathway (CMA), therefore attenuating NLRP3 inflammasome activation. Post-translationally, phosphorylation at Ser-194 by MAPK8/JNK1 increases inflammasome activation by promoting deubiquitination by BRCC3 and NLRP3 homooligomerization. Phosphorylation at Ser-803 by CSNK1A1 prevents inflammasome activation by preventing NEK7 recruitment. Phosphorylation at Ser-3 in the pyrin domain inhibits homomultimerization of NLRP3 and activation of the NLRP3 inflammasome: dephosphorylation by protein phosphatase 2A (PP2A) promotes assembly of the NLRP3 inflammasome. Phosphorylation at Ser-291 by PKD/PRKD1 promotes NLRP3 inflammasome assembly. Phosphorylation by ERK1/MAPK3 promotes NLRP3 inflammasome assembly. Phosphorylation by BTK (at Tyr-132, Tyr-136, Tyr-145 and Tyr-164) in the region that mediates binding to phosphatidylinositol phosphate, promotes relocalization of NLRP3 and assembly of the NLRP3 inflammasome. Phosphorylation at Tyr-858 inhibits NLRP3 inflammasome assembly: dephosphorylation by PTPN22 promotes inflammasome activation Phosphorylated by LATS1 and LATS2 at Ser-261 following palmitoylation by ZDHHC1, promoting its relocalization to the microtubule organizing center (MTOC), where NLRP3 is activated by NEK7, leading to inflammasome assembly and activation. In terms of processing, ubiquitinated; undergoes both 'Lys-48'- and 'Lys-63'-linked polyubiquitination. Ubiquitination does not lead to degradation, but inhibits inflammasome activation. Deubiquitination is catalyzed by BRCC3 and associated with NLRP3 activation and inflammasome assembly. This process can be induced by the activation of Toll-like receptors (by LPS), through a non-transcriptional pathway dependent on the mitochondrial production of reactive oxygen species, and by ATP. Ubiquitinated by TRIM31 via 'Lys-48'-linked ubiquitination, leading to its degradation by the proteasome. Ubiquitinated at Lys-687 by the SCF(FBXL2) complex, leading to its degradation by the proteasome. Ubiquitinated by TRIM35 via 'lys-48' and 'Lys-63'-linked ubiquitination leading to inhibition of NLRP3 inflammasome activation. Undergoes 'Lys-27'-linked polyubiquitination by MARCHF5, leading to NLRP3-NEK7 complex formation and NLRP3 oligomerization. The disulfide bond in the pyrin domain might play a role in reactive oxygen species-mediated activation. Post-translationally, palmitoylation by ZDHHC12 promotes NLRP3 degradation by the chaperone-mediated autophagy pathway (CMA) and therefore limits NLRP3 inflammasome activation. Interaction with ZDHHC12, and hence NLRP3 palmitoylation, is enhanced by ABHD8. Following palmitoylation, HSPA8/HSC70 recognizes and binds the KFERQ-like motifs on NLRP3 and promotes NLRP3 recruitment to lysosomes, where it is degraded via the chaperone-mediated autophagy pathway in a LAMP2-dependent process. Palmitoylation at Cys-834 and Cys-835 by ZDHHC5 enhances its binding to NEK7 leading to inflammasome assembly and activation. Palmitoylation at Cys-126 and Cys-955 by ZDHHC1 facilitates phosphorylation at Ser-261 by LATS1 and LATS2, promoting its relocalization to the microtubule organizing center (MTOC), where NLRP3 is activated by NEK7, leading to inflammasome assembly and activation. Depalmitoylated by ABHD17A. In terms of processing, degraded via selective autophagy following interaction with Irgm1. Irgm1 promotes NLRP3 recruitment to autophagosome membranes, promoting its SQSTM1/p62-dependent autophagy-dependent degradation. As to expression, expressed with high levels in peripheral blood leukocytes, including Th2 lymphocytes and macrophages. Expressed at low levels in resting osteoblasts (at protein level).

The protein resides in the cytoplasm. It is found in the cytosol. The protein localises to the inflammasome. It localises to the cytoskeleton. Its subcellular location is the microtubule organizing center. The protein resides in the golgi apparatus membrane. It is found in the endoplasmic reticulum. The protein localises to the mitochondrion. It localises to the secreted. Its subcellular location is the nucleus. It carries out the reaction ATP + H2O = ADP + phosphate + H(+). Under resting conditions, NLRP3 binds ADP and is autoinhibited. Inactive NLRP3 forms homodecameric double-ring cages that hide pyrin domains within NACHT-LRR rings to avoid premature activation. NLRP3 activation stimuli include extracellular ATP, nigericin, reactive oxygen species, crystals of monosodium urate or cholesterol, amyloid-beta fibers, environmental or industrial particles and nanoparticles, such as asbestos, silica, aluminum salts, cytosolic dsRNA, etc. Almost all stimuli trigger intracellular K(+) efflux. These stimuli lead to membrane perturbations that induce activation of NLRP3. Upon activation, NLRP3 is transported to microtubule organizing center (MTOC), where it is unlocked by NEK7, leading to its relocalization to dispersed trans-Golgi network (dTGN) vesicle membranes and recruitment of PYCARD/ASC for the formation of an active inflammasome complex. NEK7-activated NLRP3 forms a disk-shaped inflammasome. NLRP3 and PYCARD/ASC interact via their respective pyrin domains; interaction initiates speck formation (nucleation) which greatly enhances further addition of soluble PYCARD/ASC molecules to the speck in a prion-like polymerization process. Clustered PYCARD/ASC nucleates the formation of CASP1 filaments through the interaction of their respective CARD domains, acting as a platform for CASP1 polymerization and activation. Active CASP1 then processes IL1B and IL18 precursors, leading to the release of mature cytokines in the extracellular milieu and inflammatory response. NLRP3 inflammasome assembly is inhibited by IRGM, which impedes NLRP3 oligomerization. NLRP3 inflammasome is inhibited by cyclic AMP (cAMP), which directly binds NLRP3; inhibition is relieved by calcium-sensing receptor CASR, which inhibits production of cAMP. Specifically inhibited by sulfonylurea MCC950 (also named CP-456,773, CRID3), a potent and specific small-molecule inhibitor of the NLRP3 inflammasome that acts by preventing ATP hydrolysis. In terms of biological role, sensor component of the NLRP3 inflammasome, which mediates inflammasome activation in response to defects in membrane integrity, leading to secretion of inflammatory cytokines IL1B and IL18 and pyroptosis. In response to pathogens and other damage-associated signals that affect the integrity of membranes, initiates the formation of the inflammasome polymeric complex composed of NLRP3, CASP1 and PYCARD/ASC. Recruitment of pro-caspase-1 (proCASP1) to the NLRP3 inflammasome promotes caspase-1 (CASP1) activation, which subsequently cleaves and activates inflammatory cytokines IL1B and IL18 and gasdermin-D (GSDMD), promoting cytokine secretion and pyroptosis. Activation of NLRP3 inflammasome is also required for HMGB1 secretion; stimulating inflammatory responses. Under resting conditions, ADP-bound NLRP3 is autoinhibited. NLRP3 activation stimuli include extracellular ATP, nigericin, reactive oxygen species, crystals of monosodium urate or cholesterol, amyloid-beta fibers, environmental or industrial particles and nanoparticles, such as asbestos, silica, aluminum salts, cytosolic dsRNA, etc. Almost all stimuli trigger intracellular K(+) efflux. These stimuli lead to membrane perturbation and activation of NLRP3. Upon activation, NLRP3 is transported to microtubule organizing center (MTOC), where it is unlocked by NEK7, leading to its relocalization to dispersed trans-Golgi network (dTGN) vesicle membranes and formation of an active inflammasome complex. Associates with dTGN vesicle membranes by binding to phosphatidylinositol 4-phosphate (PtdIns4P). Shows ATPase activity. Its function is as follows. Independently of inflammasome activation, regulates the differentiation of T helper 2 (Th2) cells and has a role in Th2 cell-dependent asthma and tumor growth. During Th2 differentiation, required for optimal IRF4 binding to IL4 promoter and for IRF4-dependent IL4 transcription. Binds to the consensus DNA sequence 5'-GRRGGNRGAG-3'. May also participate in the transcription of IL5, IL13, GATA3, CCR3, CCR4 and MAF. The sequence is that of NACHT, LRR and PYD domains-containing protein 3 from Mus musculus (Mouse).